Reading from the N-terminus, the 549-residue chain is Oxygen-dependent choline dehydrogenase (549 aa).

D4–E33 is a binding site for FAD. The Proton acceptor role is filled by H465.

The protein belongs to the GMC oxidoreductase family. Requires FAD as cofactor.

The catalysed reaction is choline + A = betaine aldehyde + AH2. The enzyme catalyses betaine aldehyde + NAD(+) + H2O = glycine betaine + NADH + 2 H(+). It participates in amine and polyamine biosynthesis; betaine biosynthesis via choline pathway; betaine aldehyde from choline (cytochrome c reductase route): step 1/1. Involved in the biosynthesis of the osmoprotectant glycine betaine. Catalyzes the oxidation of choline to betaine aldehyde and betaine aldehyde to glycine betaine at the same rate. This chain is Oxygen-dependent choline dehydrogenase, found in Brucella suis biovar 1 (strain 1330).